Reading from the N-terminus, the 48-residue chain is Small, acid-soluble spore protein G (48 aa).

A compositionally biased stretch (basic and acidic residues) spans 1-16; that stretch reads MSENRHENEENRRDAA. Positions 1–48 are disordered; that stretch reads MSENRHENEENRRDAAVAKVQNSGNAKVVVSVNTDQDQAQAQSQDGED. Residues 35–48 show a composition bias toward low complexity; that stretch reads DQDQAQAQSQDGED.

The sequence is that of Small, acid-soluble spore protein G (sspG) from Bacillus subtilis (strain 168).